The following is a 38-amino-acid chain: Toxin BmK NSPK (38 aa).

3 cysteine pairs are disulfide-bonded: Cys7–Cys27, Cys13–Cys32, and Cys17–Cys34.

In terms of tissue distribution, expressed by the venom gland.

It is found in the secreted. Blocks voltage-gated potassium (Kv) channel and augments neurite extension via NGF/TrkA signaling pathway. The chain is Toxin BmK NSPK from Olivierus martensii (Manchurian scorpion).